The sequence spans 294 residues: ATP synthase gamma chain (294 aa).

This sequence belongs to the ATPase gamma chain family. In terms of assembly, F-type ATPases have 2 components, CF(1) - the catalytic core - and CF(0) - the membrane proton channel. CF(1) has five subunits: alpha(3), beta(3), gamma(1), delta(1), epsilon(1). CF(0) has three main subunits: a, b and c.

The protein resides in the cell inner membrane. Its function is as follows. Produces ATP from ADP in the presence of a proton gradient across the membrane. The gamma chain is believed to be important in regulating ATPase activity and the flow of protons through the CF(0) complex. The protein is ATP synthase gamma chain of Rhizobium etli (strain CIAT 652).